The chain runs to 149 residues: Snake venom vascular endothelial growth factor toxin 2 (149 aa).

Positions 1–24 are cleaved as a signal peptide; the sequence is MAAYLLAVAILFCIQGWPSGTVQG. Position 25 is a pyrrolidone carboxylic acid (Gln25). Intrachain disulfides connect Cys38–Cys80, Cys69–Cys115, and Cys73–Cys117. Residues 118–149 are disordered; that stretch reads RPRSGRVNSGKRKRNPEEGGAESQVPLGLTSF.

It belongs to the PDGF/VEGF growth factor family. Snake venom VEGF subfamily. Homodimer; disulfide-linked. Interacts with VEGF receptor-1 (FLT1) with a high affinity, whereas it binds to VEGF receptor-2 (KDR) with a low affinity. Does not bind VEGF receptor-3 (FLT4). As to expression, expressed by the venom gland.

It is found in the secreted. Snake venom VEGFs that may contribute to venom dispersion and prey subjugation by inducing vascular permeability and hypotension. This protein induces an increase in capillary permeability after intradermal injection, as well as a drastic hypotensive effect after intravenous injection. The hypotension is mediated by nitric oxide (NO), which is produced by VEGF-activated endothelium NO synthase. Also induces angiogenesis in vitro. Like other crotalid VEGFs, this protein interacts with VEGF receptor-1 (FLT1) with a high affinity, whereas it binds to VEGF receptor-2 (KDR) with a low affinity. The sequence is that of Snake venom vascular endothelial growth factor toxin 2 from Sistrurus catenatus edwardsii (Desert massasauga).